We begin with the raw amino-acid sequence, 319 residues long: D-galacturonate reductase (319 aa).

Tyr-58 serves as the catalytic Proton donor. Residue His-121 participates in substrate binding. 216-275 (SPLGAARTKWGDDRVLGSDIIEEIAQAKGKSTAQISLRWVYEQGVSIVTKSYNKERMRQN) is an NADP(+) binding site.

This sequence belongs to the aldo/keto reductase family. Expressed specifically in the receptacle tissue of the fruit.

It catalyses the reaction L-galactonate + NADP(+) = aldehydo-D-galacturonate + NADPH + H(+). The protein operates within cofactor biosynthesis; L-ascorbate biosynthesis. Functionally, involved in ascorbic acid (vitamin C) biosynthesis. This is D-galacturonate reductase (GALUR) from Fragaria ananassa (Strawberry).